The chain runs to 371 residues: Cysteine proteinase 1 (371 aa).

Positions 1-18 are cleaved as a signal peptide; sequence MAHRVLLLLSLASAAAVA. Residues 19–136 constitute a propeptide, activation peptide; the sequence is AAVDAEDPLI…HEAPVLPTDG (118 aa). 2 disulfides stabilise this stretch: Cys-158/Cys-208 and Cys-192/Cys-241. Cys-161 is an active-site residue. Asn-254 is a glycosylation site (N-linked (GlcNAc...) asparagine). Cysteines 297 and 354 form a disulfide. Residues His-303 and Asn-330 contribute to the active site.

This sequence belongs to the peptidase C1 family. In terms of tissue distribution, expressed during the late stages of seed ripening, in mature seeds and during germination.

Functionally, involved in the degradation of the storage protein zein. May play a role in proteolysis during emergencies. The sequence is that of Cysteine proteinase 1 (CCP1) from Zea mays (Maize).